A 333-amino-acid chain; its full sequence is Nucleoid-associated protein YE1421 (333 aa).

Belongs to the YejK family.

It localises to the cytoplasm. The protein localises to the nucleoid. The polypeptide is Nucleoid-associated protein YE1421 (Yersinia enterocolitica serotype O:8 / biotype 1B (strain NCTC 13174 / 8081)).